Here is a 168-residue protein sequence, read N- to C-terminus: Sensor histidine kinase component HK1 (168 aa).

Residues 1–141 form the Histidine kinase; second part domain; it reads MPITPLLHES…ELRITLPTPR (141 aa). The disordered stretch occupies residues 137 to 168; sequence LPTPRPPFHEELPRITSSDTKDPNREHDTSDQ. The span at 143–168 shows a compositional bias: basic and acidic residues; it reads PFHEELPRITSSDTKDPNREHDTSDQ.

In terms of assembly, interacts with HK2.

It catalyses the reaction ATP + protein L-histidine = ADP + protein N-phospho-L-histidine.. Its function is as follows. Member of the three-protein two-component system HK1/HK2/TcrA. Kinase that binds ATP and catalyzes the transfer of a phosphoryl group from ATP to HK2. The chain is Sensor histidine kinase component HK1 from Mycobacterium tuberculosis (strain ATCC 25618 / H37Rv).